The primary structure comprises 211 residues: Methylthioribulose-1-phosphate dehydratase (211 aa).

H105 and H107 together coordinate Zn(2+).

It belongs to the aldolase class II family. MtnB subfamily. Zn(2+) is required as a cofactor.

It catalyses the reaction 5-(methylsulfanyl)-D-ribulose 1-phosphate = 5-methylsulfanyl-2,3-dioxopentyl phosphate + H2O. The protein operates within amino-acid biosynthesis; L-methionine biosynthesis via salvage pathway; L-methionine from S-methyl-5-thio-alpha-D-ribose 1-phosphate: step 2/6. Catalyzes the dehydration of methylthioribulose-1-phosphate (MTRu-1-P) into 2,3-diketo-5-methylthiopentyl-1-phosphate (DK-MTP-1-P). The protein is Methylthioribulose-1-phosphate dehydratase of Acidiphilium cryptum (strain JF-5).